Here is a 431-residue protein sequence, read N- to C-terminus: Adenylosuccinate synthetase (431 aa).

GTP-binding positions include 12–18 and 40–42; these read GDEGKGK and GHT. Asp13 functions as the Proton acceptor in the catalytic mechanism. The Mg(2+) site is built by Asp13 and Gly40. Residues 13 to 16, 38 to 41, Thr129, Arg143, Gln224, Thr239, and Arg303 contribute to the IMP site; these read DEGK and NAGH. The Proton donor role is filled by His41. 299–305 is a binding site for substrate; it reads TVSNRQR. Residues Arg305, 331-333, and 413-415 contribute to the GTP site; these read KLD and STG.

The protein belongs to the adenylosuccinate synthetase family. As to quaternary structure, homodimer. It depends on Mg(2+) as a cofactor.

Its subcellular location is the cytoplasm. It carries out the reaction IMP + L-aspartate + GTP = N(6)-(1,2-dicarboxyethyl)-AMP + GDP + phosphate + 2 H(+). The protein operates within purine metabolism; AMP biosynthesis via de novo pathway; AMP from IMP: step 1/2. Functionally, plays an important role in the de novo pathway of purine nucleotide biosynthesis. Catalyzes the first committed step in the biosynthesis of AMP from IMP. This Ehrlichia canis (strain Jake) protein is Adenylosuccinate synthetase.